A 405-amino-acid chain; its full sequence is Probable dual-specificity RNA methyltransferase RlmN (405 aa).

Over residues 1–15 (MSSTGSSVSTSGLVL) the composition is skewed to low complexity. Residues 1–34 (MSSTGSSVSTSGLVLPSTPLAEPGKEVPLVVNTP) form a disordered region. Glu130 serves as the catalytic Proton acceptor. The 245-residue stretch at 142 to 386 (SAARATLCLS…VTVRDTRGSE (245 aa)) folds into the Radical SAM core domain. An intrachain disulfide couples Cys149 to Cys391. [4Fe-4S] cluster is bound by residues Cys156, Cys160, and Cys163. S-adenosyl-L-methionine-binding positions include 211–212 (GE), Ser245, 268–270 (SLH), and Asn348. Residue Cys391 is the S-methylcysteine intermediate of the active site.

The protein belongs to the radical SAM superfamily. RlmN family. Requires [4Fe-4S] cluster as cofactor.

The protein resides in the cytoplasm. It catalyses the reaction adenosine(2503) in 23S rRNA + 2 reduced [2Fe-2S]-[ferredoxin] + 2 S-adenosyl-L-methionine = 2-methyladenosine(2503) in 23S rRNA + 5'-deoxyadenosine + L-methionine + 2 oxidized [2Fe-2S]-[ferredoxin] + S-adenosyl-L-homocysteine. The enzyme catalyses adenosine(37) in tRNA + 2 reduced [2Fe-2S]-[ferredoxin] + 2 S-adenosyl-L-methionine = 2-methyladenosine(37) in tRNA + 5'-deoxyadenosine + L-methionine + 2 oxidized [2Fe-2S]-[ferredoxin] + S-adenosyl-L-homocysteine. In terms of biological role, specifically methylates position 2 of adenine 2503 in 23S rRNA and position 2 of adenine 37 in tRNAs. The chain is Probable dual-specificity RNA methyltransferase RlmN from Cutibacterium acnes (strain DSM 16379 / KPA171202) (Propionibacterium acnes).